A 183-amino-acid polypeptide reads, in one-letter code: Transmembrane and coiled-coil domain-containing protein 2 (183 aa).

A helical membrane pass occupies residues 54 to 74; sequence VQIILGISFLTLLAIGLFALW. Residues 127-150 adopt a coiled-coil conformation; it reads GLQEKILKKLQMVENKVRDLEGII.

The protein localises to the membrane. The sequence is that of Transmembrane and coiled-coil domain-containing protein 2 (Tmco2) from Mus musculus (Mouse).